A 304-amino-acid polypeptide reads, in one-letter code: Acetylglutamate kinase (304 aa).

Substrate is bound by residues 64-65, arginine 86, and asparagine 181; that span reads GG.

Belongs to the acetylglutamate kinase family. ArgB subfamily.

It localises to the plastid. Its subcellular location is the chloroplast. The enzyme catalyses N-acetyl-L-glutamate + ATP = N-acetyl-L-glutamyl 5-phosphate + ADP. It functions in the pathway amino-acid biosynthesis; L-arginine biosynthesis; N(2)-acetyl-L-ornithine from L-glutamate: step 2/4. Catalyzes the ATP-dependent phosphorylation of N-acetyl-L-glutamate. This Cyanidium caldarium (Red alga) protein is Acetylglutamate kinase.